A 59-amino-acid chain; its full sequence is Large ribosomal subunit protein uL30 (59 aa).

This sequence belongs to the universal ribosomal protein uL30 family. Part of the 50S ribosomal subunit.

In Listeria welshimeri serovar 6b (strain ATCC 35897 / DSM 20650 / CCUG 15529 / CIP 8149 / NCTC 11857 / SLCC 5334 / V8), this protein is Large ribosomal subunit protein uL30.